We begin with the raw amino-acid sequence, 1664 residues long: Cortactin-binding protein 2 (1664 aa).

Disordered stretches follow at residues Met1–Ala23, Gln268–Pro440, Gly455–Ser479, and Gln495–Ile618. The stretch at Arg119–Lys276 forms a coiled coil. Low complexity-rich tracts occupy residues Ser368–Ser379 and Thr395–Pro407. An Asymmetric dimethylarginine modification is found at Arg499. 6 ANK repeats span residues Gly710–Tyr740, Asp744–Ala773, Asn777–His806, Gly810–Ile839, Asp843–Gly872, and Glu913–Lys943. Residues Arg871 to Pro900 form a disordered region. Positions Ser1447 to Gly1483 are disordered. A Phosphoserine modification is found at Ser1525. Residues Arg1558–Thr1664 are disordered. Residues Pro1587–Lys1600 show a composition bias toward polar residues. Residues Ser1625–Gln1639 show a composition bias toward low complexity. Over residues Ser1646–Thr1664 the composition is skewed to basic and acidic residues.

In terms of assembly, interacts with CTTN/cortactin SH3 domain. Interacts with STRN, STRN4/zinedin and MOB4/phocein; this interactions mediate the association with the STRIPAK core complex and may regulate dendritic spine distribution of the STRIPAK complex in hippocampal neurons. Activation of glutamate receptors weakens the interaction with STRN and STRN4.

It localises to the cytoplasm. The protein resides in the cell cortex. The protein localises to the cell projection. Its subcellular location is the dendritic spine. Its function is as follows. Regulates the dendritic spine distribution of CTTN/cortactin in hippocampal neurons, and thus controls dendritic spinogenesis and dendritic spine maintenance. Associates with the striatin-interacting phosphatase and kinase (STRIPAK) core complex to regulate dendritic spine distribution of the STRIPAK complex in hippocampal neurons. The sequence is that of Cortactin-binding protein 2 (CTTNBP2) from Oryctolagus cuniculus (Rabbit).